The following is a 282-amino-acid chain: Transmembrane protein 41B (282 aa).

Positions 1–36 (MAKKRAGNRETESSPLVEQEPRPSKETPVPKGAQSP) are disordered. A run of 6 helical transmembrane segments spans residues 43 to 63 (MSILLLVVIFACSACVMYLVF), 102 to 122 (TQVLLAYFATYIFLQTFAIPG), 138 to 160 (LALFLVCLCSGLGASFCYMLSYL), 188 to 208 (LINYIIFLRITPFLPNWFINI), 216 to 236 (PLGVFFLGTFLGVAPPSFVAI), and 251 to 271 (AVSWNSLLVLGVLAVVSILPV). Residues 131–242 (GYLYPFPLAL…FVAINAGTTL (112 aa)) are VTT domain; required for its function in autophagy.

The protein belongs to the TMEM41 family.

Its subcellular location is the endoplasmic reticulum membrane. The protein localises to the endomembrane system. The enzyme catalyses a 1,2-diacyl-sn-glycero-3-phospho-L-serine(in) = a 1,2-diacyl-sn-glycero-3-phospho-L-serine(out). It carries out the reaction cholesterol(in) = cholesterol(out). The catalysed reaction is a 1,2-diacyl-sn-glycero-3-phosphocholine(in) = a 1,2-diacyl-sn-glycero-3-phosphocholine(out). It catalyses the reaction a 1,2-diacyl-sn-glycero-3-phosphoethanolamine(in) = a 1,2-diacyl-sn-glycero-3-phosphoethanolamine(out). Functionally, phospholipid scramblase involved in lipid homeostasis and membrane dynamics processes. Has phospholipid scramblase activity toward cholesterol and phosphatidylserine, as well as phosphatidylethanolamine and phosphatidylcholine. Required for autophagosome formation: participates in early stages of autophagosome biogenesis at the endoplasmic reticulum (ER) membrane by reequilibrating the leaflets of the ER as lipids are extracted by atg2 (atg2a or atg2b) to mediate autophagosome assembly. In addition to autophagy, involved in other processes in which phospholipid scramblase activity is required. Required for normal motor neuron development. The sequence is that of Transmembrane protein 41B from Danio rerio (Zebrafish).